A 368-amino-acid polypeptide reads, in one-letter code: 4-hydroxy-3-methylbut-2-en-1-yl diphosphate synthase (flavodoxin) (368 aa).

The [4Fe-4S] cluster site is built by Cys-268, Cys-271, Cys-303, and Glu-310.

The protein belongs to the IspG family. The cofactor is [4Fe-4S] cluster.

It carries out the reaction (2E)-4-hydroxy-3-methylbut-2-enyl diphosphate + oxidized [flavodoxin] + H2O + 2 H(+) = 2-C-methyl-D-erythritol 2,4-cyclic diphosphate + reduced [flavodoxin]. Its pathway is isoprenoid biosynthesis; isopentenyl diphosphate biosynthesis via DXP pathway; isopentenyl diphosphate from 1-deoxy-D-xylulose 5-phosphate: step 5/6. In terms of biological role, converts 2C-methyl-D-erythritol 2,4-cyclodiphosphate (ME-2,4cPP) into 1-hydroxy-2-methyl-2-(E)-butenyl 4-diphosphate. The protein is 4-hydroxy-3-methylbut-2-en-1-yl diphosphate synthase (flavodoxin) of Listeria monocytogenes serotype 4b (strain CLIP80459).